Reading from the N-terminus, the 87-residue chain is Toxin Cll3 (87 aa).

The N-terminal stretch at 1-19 (MNSLLMITACLAVIGTVWA) is a signal peptide. An LCN-type CS-alpha/beta domain is found at 20 to 85 (KEGYIVNYYD…VWPLPNKTCY (66 aa)). Disulfide bonds link C31–C84, C35–C60, C44–C65, and C48–C67. Y85 is subject to Tyrosine amide.

The protein belongs to the long (4 C-C) scorpion toxin superfamily. Sodium channel inhibitor family. Beta subfamily. Expressed by the venom gland.

It localises to the secreted. Its function is as follows. Beta toxins bind voltage-independently at site-4 of sodium channels (Nav) and shift the voltage of activation toward more negative potentials thereby affecting sodium channel activation and promoting spontaneous and repetitive firing. This is Toxin Cll3 from Centruroides limpidus (Mexican scorpion).